A 353-amino-acid polypeptide reads, in one-letter code: S-adenosylmethionine:tRNA ribosyltransferase-isomerase (353 aa).

This sequence belongs to the QueA family. Monomer.

It localises to the cytoplasm. It catalyses the reaction 7-aminomethyl-7-carbaguanosine(34) in tRNA + S-adenosyl-L-methionine = epoxyqueuosine(34) in tRNA + adenine + L-methionine + 2 H(+). Its pathway is tRNA modification; tRNA-queuosine biosynthesis. Its function is as follows. Transfers and isomerizes the ribose moiety from AdoMet to the 7-aminomethyl group of 7-deazaguanine (preQ1-tRNA) to give epoxyqueuosine (oQ-tRNA). This chain is S-adenosylmethionine:tRNA ribosyltransferase-isomerase, found in Burkholderia vietnamiensis (strain G4 / LMG 22486) (Burkholderia cepacia (strain R1808)).